The sequence spans 63 residues: Large ribosomal subunit protein bL28 (63 aa).

This sequence belongs to the bacterial ribosomal protein bL28 family.

This is Large ribosomal subunit protein bL28 from Beutenbergia cavernae (strain ATCC BAA-8 / DSM 12333 / CCUG 43141 / JCM 11478 / NBRC 16432 / NCIMB 13614 / HKI 0122).